The sequence spans 296 residues: NAD kinase (296 aa).

Catalysis depends on aspartate 74, which acts as the Proton acceptor. NAD(+) contacts are provided by residues 74-75 (DG), 148-149 (ND), arginine 176, aspartate 178, and 189-194 (TAYALS).

Belongs to the NAD kinase family. A divalent metal cation serves as cofactor.

The protein resides in the cytoplasm. The enzyme catalyses NAD(+) + ATP = ADP + NADP(+) + H(+). Functionally, involved in the regulation of the intracellular balance of NAD and NADP, and is a key enzyme in the biosynthesis of NADP. Catalyzes specifically the phosphorylation on 2'-hydroxyl of the adenosine moiety of NAD to yield NADP. This chain is NAD kinase, found in Nitrosomonas europaea (strain ATCC 19718 / CIP 103999 / KCTC 2705 / NBRC 14298).